The following is a 539-amino-acid chain: Inosine-5'-monophosphate dehydrogenase (539 aa).

CBS domains lie at 140 to 196 and 200 to 257; these read IIVN…DMPI and MTRE…PRAC. Residues Asp-292 and 343–345 contribute to the NAD(+) site; that span reads GIG. Residues Gly-345 and Gly-347 each coordinate K(+). Ser-348 is a binding site for IMP. Cys-350 is a binding site for K(+). The active-site Thioimidate intermediate is Cys-350. Residues 383–385, 406–407, and 430–434 each bind IMP; these read DGG, GS, and YRGMG. Arg-446 serves as the catalytic Proton acceptor. Position 460 (Glu-460) interacts with IMP. The K(+) site is built by Glu-514 and His-516. Residues 517–539 are disordered; sequence PHDIAITQEAPNYSPDVHSGDAG.

The protein belongs to the IMPDH/GMPR family. As to quaternary structure, homotetramer. K(+) serves as cofactor.

The enzyme catalyses IMP + NAD(+) + H2O = XMP + NADH + H(+). It functions in the pathway purine metabolism; XMP biosynthesis via de novo pathway; XMP from IMP: step 1/1. With respect to regulation, mycophenolic acid (MPA) is a non-competitive inhibitor that prevents formation of the closed enzyme conformation by binding to the same site as the amobile flap. In contrast, mizoribine monophosphate (MZP) is a competitive inhibitor that induces the closed conformation. MPA is a potent inhibitor of mammalian IMPDHs but a poor inhibitor of the bacterial enzymes. MZP is a more potent inhibitor of bacterial IMPDH. In terms of biological role, catalyzes the conversion of inosine 5'-phosphate (IMP) to xanthosine 5'-phosphate (XMP), the first committed and rate-limiting step in the de novo synthesis of guanine nucleotides, and therefore plays an important role in the regulation of cell growth. This Rhodopirellula baltica (strain DSM 10527 / NCIMB 13988 / SH1) protein is Inosine-5'-monophosphate dehydrogenase.